The following is a 122-amino-acid chain: ATP synthase epsilon chain (122 aa).

The protein belongs to the ATPase epsilon chain family. As to quaternary structure, F-type ATPases have 2 components, CF(1) - the catalytic core - and CF(0) - the membrane proton channel. CF(1) has five subunits: alpha(3), beta(3), gamma(1), delta(1), epsilon(1). CF(0) has three main subunits: a, b and c.

The protein resides in the cell membrane. Produces ATP from ADP in the presence of a proton gradient across the membrane. The polypeptide is ATP synthase epsilon chain (Rhodococcus erythropolis (strain PR4 / NBRC 100887)).